Consider the following 329-residue polypeptide: HTH-type transcriptional regulator ArgR (329 aa).

Positions 214–312 (TQAVLLMEAN…GVTPREDRNQ (99 aa)) constitute an HTH araC/xylS-type domain. 2 DNA-binding regions (H-T-H motif) span residues 231-252 (DEIAQHVCVSRRQLERIFKQYL) and 279-302 (IIQIGLSCGFSSGPHFSSAYRNFF). Residues 307 to 329 (REDRNQRRGGSAFETTFTPVERG) are disordered. The span at 319–329 (FETTFTPVERG) shows a compositional bias: polar residues.

In terms of biological role, argR could be a transcriptional activator of the dauBAR operon in response to the presence of L-Arg. The protein is HTH-type transcriptional regulator ArgR (argR) of Pseudomonas aeruginosa (strain ATCC 15692 / DSM 22644 / CIP 104116 / JCM 14847 / LMG 12228 / 1C / PRS 101 / PAO1).